A 225-amino-acid polypeptide reads, in one-letter code: 3-dehydroquinate dehydratase (225 aa).

3-dehydroquinate is bound by residues Ser-6, 30–32, and Arg-62; that span reads EWR. The active-site Proton donor/acceptor is His-118. Lys-143 serves as the catalytic Schiff-base intermediate with substrate. Residues Arg-186, Ser-205, and Gln-209 each contribute to the 3-dehydroquinate site.

This sequence belongs to the type-I 3-dehydroquinase family. In terms of assembly, homodimer.

It carries out the reaction 3-dehydroquinate = 3-dehydroshikimate + H2O. The protein operates within metabolic intermediate biosynthesis; chorismate biosynthesis; chorismate from D-erythrose 4-phosphate and phosphoenolpyruvate: step 3/7. Involved in the third step of the chorismate pathway, which leads to the biosynthesis of aromatic amino acids. Catalyzes the cis-dehydration of 3-dehydroquinate (DHQ) and introduces the first double bond of the aromatic ring to yield 3-dehydroshikimate. This Streptococcus pneumoniae (strain P1031) protein is 3-dehydroquinate dehydratase.